A 444-amino-acid chain; its full sequence is MSQSYINVIGAGLAGSEAAYQIAERGIPVKLYEMRGVKSTPQHKTDNFAELVCSNSLRGDALTNAVGLLKEEMRRLGSVILESAEATRVPAGGALAVDRDGFSQMVTEKVANHPLIEVVRDEITELPTDVITVIATGPLTSDALAEKIHALNDGDGFYFYDAAAPIIDVNTIDMSKVYLKSRYDKGEAAYLNAPMTKQEFMDFHEALVNAEEAPLNSFEKEKYFEGCMPIEVMAKRGIKTMLYGPMKPVGLEYPDDYTGPRDGEFKTPYAVVQLRQDNAAGSLYNIVGFQTHLKWGEQKRVFQMIPGLENAEFVRYGVMHRNSYMDSPNLLEQTYRSKKQPNLFFAGQMTGVEGYVESAASGLVAGINAARLFKEESEVIFPETTAIGSLAHYITHADSKHFQPMNVNFGIIKELEGERIRDKKARYEKIAERALADLEEFLTV.

10 to 15 (GAGLAG) provides a ligand contact to FAD.

It belongs to the MnmG family. TrmFO subfamily. It depends on FAD as a cofactor.

Its subcellular location is the cytoplasm. It carries out the reaction uridine(54) in tRNA + (6R)-5,10-methylene-5,6,7,8-tetrahydrofolate + NADH + H(+) = 5-methyluridine(54) in tRNA + (6S)-5,6,7,8-tetrahydrofolate + NAD(+). The enzyme catalyses uridine(54) in tRNA + (6R)-5,10-methylene-5,6,7,8-tetrahydrofolate + NADPH + H(+) = 5-methyluridine(54) in tRNA + (6S)-5,6,7,8-tetrahydrofolate + NADP(+). Catalyzes the folate-dependent formation of 5-methyl-uridine at position 54 (M-5-U54) in all tRNAs. This Streptococcus pneumoniae serotype 2 (strain D39 / NCTC 7466) protein is Methylenetetrahydrofolate--tRNA-(uracil-5-)-methyltransferase TrmFO.